The chain runs to 1449 residues: ABC transporter G family member 21 (1449 aa).

The segment covering 1 to 10 has biased composition (basic and acidic residues); sequence MEEYELREIA. Residues 1–49 are disordered; sequence MEEYELREIALQEGGSNLDINTPPNYDNPVGDGSSPPDSPDIQKSENQF. Positions 14 to 25 are enriched in polar residues; that stretch reads GGSNLDINTPPN. Residues 130–383 enclose the ABC transporter 1 domain; that stretch reads ISFFNLFKPS…FIDLGFDCEP (254 aa). One can recognise an ABC transmembrane type-2 1 domain in the interval 488-731; the sequence is WGDKFSLISR…ILSVEGKDYL (244 aa). 5 helical membrane-spanning segments follow: residues 519–539, 577–597, 602–622, 634–654, and 747–767; these read IPGL…NAFL, IPLT…MFGL, GKFF…TNLF, ISQN…GYTI, and FITY…MEYF. The region spanning 818-1062 is the ABC transporter 2 domain; sequence FTWQNINYTV…LTSYFERYGV (245 aa). 854–861 provides a ligand contact to ATP; sequence GSSGAGKT. One can recognise an ABC transmembrane type-2 2 domain in the interval 1152 to 1386; that stretch reads FYTYGSFIQS…PISEPLTGYV (235 aa). The next 6 membrane-spanning stretches (helical) occupy residues 1155–1175, 1188–1208, 1228–1248, 1266–1286, 1296–1316, and 1423–1443; these read YGSF…FWSL, FIFE…PQFI, FAIS…TIFF, FYFW…GQAV, AHTL…VMVI, and LALI…FVYI.

It belongs to the ABC transporter superfamily. ABCG family. PDR (TC 3.A.1.205) subfamily.

It localises to the membrane. The sequence is that of ABC transporter G family member 21 (abcG21) from Dictyostelium discoideum (Social amoeba).